Consider the following 194-residue polypeptide: 3-isopropylmalate dehydratase small subunit (194 aa).

Belongs to the LeuD family. LeuD type 1 subfamily. In terms of assembly, heterodimer of LeuC and LeuD.

The catalysed reaction is (2R,3S)-3-isopropylmalate = (2S)-2-isopropylmalate. The protein operates within amino-acid biosynthesis; L-leucine biosynthesis; L-leucine from 3-methyl-2-oxobutanoate: step 2/4. Functionally, catalyzes the isomerization between 2-isopropylmalate and 3-isopropylmalate, via the formation of 2-isopropylmaleate. This chain is 3-isopropylmalate dehydratase small subunit, found in Halalkalibacterium halodurans (strain ATCC BAA-125 / DSM 18197 / FERM 7344 / JCM 9153 / C-125) (Bacillus halodurans).